The primary structure comprises 173 residues: Ferric citrate uptake sigma factor FecI (173 aa).

The Polymerase core binding signature appears at 40–52 (DIAQDTFLRVMVS). Residues 139 to 158 (YSEIAHKLGVSISSVKKYVA) constitute a DNA-binding region (H-T-H motif).

The protein belongs to the sigma-70 factor family. ECF subfamily. As to quaternary structure, interacts with FecR (via cytoplasmic N-terminus).

Functionally, sigma factors are initiation factors that promote the attachment of RNA polymerase to specific initiation sites and are then released. This sigma factor regulates transcriptional activation of the fecABCDE operon which mediates ferric citrate transport. The chain is Ferric citrate uptake sigma factor FecI (fecI) from Escherichia coli (strain K12).